A 162-amino-acid chain; its full sequence is Small ribosomal subunit protein uS5 (162 aa).

Residues 11 to 74 (LTDRVVHISR…EQAKKNLIKV (64 aa)) enclose the S5 DRBM domain.

The protein belongs to the universal ribosomal protein uS5 family. In terms of assembly, part of the 30S ribosomal subunit. Contacts proteins S4 and S8.

Its function is as follows. With S4 and S12 plays an important role in translational accuracy. In terms of biological role, located at the back of the 30S subunit body where it stabilizes the conformation of the head with respect to the body. In Pelobacter propionicus (strain DSM 2379 / NBRC 103807 / OttBd1), this protein is Small ribosomal subunit protein uS5.